We begin with the raw amino-acid sequence, 213 residues long: Uridine kinase (213 aa).

13–20 (GASASGKS) contacts ATP.

It belongs to the uridine kinase family.

It is found in the cytoplasm. The enzyme catalyses uridine + ATP = UMP + ADP + H(+). The catalysed reaction is cytidine + ATP = CMP + ADP + H(+). It functions in the pathway pyrimidine metabolism; CTP biosynthesis via salvage pathway; CTP from cytidine: step 1/3. It participates in pyrimidine metabolism; UMP biosynthesis via salvage pathway; UMP from uridine: step 1/1. This is Uridine kinase from Haemophilus influenzae (strain PittGG).